The chain runs to 333 residues: Cytochrome f (333 aa).

The N-terminal stretch at 1 to 16 is a signal peptide; it reads MRNVFRTARLTRSARA. Residues 17–36 traverse the membrane as a helical segment; the sequence is IVKTLLIAIATVTFYFTSDL. Residues tyrosine 45, cysteine 66, cysteine 69, and histidine 70 each coordinate heme. The helical transmembrane segment at 299–319 threads the bilayer; the sequence is VKWMIAFVALVMLAQVMLVLK.

It belongs to the cytochrome f family. As to quaternary structure, the 4 large subunits of the cytochrome b6-f complex are cytochrome b6, subunit IV (17 kDa polypeptide, PetD), cytochrome f and the Rieske protein, while the 4 small subunits are PetG, PetL, PetM and PetN. The complex functions as a dimer. Requires heme as cofactor.

Its subcellular location is the cellular thylakoid membrane. Its function is as follows. Component of the cytochrome b6-f complex, which mediates electron transfer between photosystem II (PSII) and photosystem I (PSI), cyclic electron flow around PSI, and state transitions. The chain is Cytochrome f from Nostoc punctiforme (strain ATCC 29133 / PCC 73102).